Here is a 174-residue protein sequence, read N- to C-terminus: Transcriptional repressor NrdR (174 aa).

A zinc finger lies at 3–34 (CPFCQHNDTRVIDSRVSEDGTTIRRRRECEAC). The 91-residue stretch at 49–139 (PTVVKSDGGR…VYRSFQDVAD (91 aa)) folds into the ATP-cone domain.

It belongs to the NrdR family. Zn(2+) is required as a cofactor.

Negatively regulates transcription of bacterial ribonucleotide reductase nrd genes and operons by binding to NrdR-boxes. The sequence is that of Transcriptional repressor NrdR from Xanthomonas campestris pv. campestris (strain 8004).